A 64-amino-acid chain; its full sequence is Bacteriocin plantaricin ASM1 (64 aa).

A signal peptide spans 1–21; the sequence is MSKLVKTLTVDEISKIQTNGG. The segment at residues 61-64 is a cross-link (lanthionine (Ser-Cys)); sequence SYHC.

Post-translationally, contains 2 disulfide bonds.

It is found in the secreted. Bacteriocin with a narrow antibacterial spectrum. Antibacterial activity against the Gram-positive bacteria L.plantarun, L.pentosus, L.curvatus, L.lindneri, L.mesenteroides and E.faecilis. Lacks antibacterial activity against the Gram-positive bacteria L.brevis, L.sakei, L.lactis, P.acidilactici, B.subtilis, B.cereus, L.monocytogenes and S.aureus, and against the Gram-negative bacteria E.coli and S.typhimurium. This chain is Bacteriocin plantaricin ASM1, found in Lactiplantibacillus plantarum (Lactobacillus plantarum).